Reading from the N-terminus, the 50-residue chain is Ampulexin 2 (50 aa).

The first 26 residues, 1–26 (MKAIMVLFYVMTLTIIGSFSMVSGSP), serve as a signal peptide directing secretion.

Dimer; disulfide-linked. As to expression, expressed in venom sac and, to a lesser extent, in venom gland. Not expressed in brain.

The protein resides in the secreted. Functionally, amphipathic peptide which probably adopts an alpha-helical structure. Has no antimicrobial activity against E.coli DH5alpha or B.thuringiensis. Is not cytotoxic in vitro. In Ampulex compressa (Emerald cockroach wasp), this protein is Ampulexin 2.